A 442-amino-acid chain; its full sequence is Protein UNUSUAL FLORAL ORGANS (442 aa).

Residues methionine 1–threonine 85 form an interaction with SKP1A region. The region spanning glycine 44–tyrosine 90 is the F-box domain.

In terms of assembly, part of a putative SCF (ASK/Cullin/F-box) ubiquitin ligase complex. Interacts with SKP1A/ASK1, SKP1B/ASK2 and ASK11.

The protein localises to the nucleus. The protein operates within protein modification; protein ubiquitination. In terms of biological role, component of SCF(ASK-cullin-F-box) E3 ubiquitin ligase complexes, which may mediate the ubiquitination and subsequent proteasomal degradation of target proteins. Considered as a meristem identity factor required for normal growth of the young floral meristem. Acts together with LEAFY to positively regulate the B class floral homeotic genes APETALA3 and PISTILLATA. In this way, operates as a region-specific regulator for petal and stamen development. Alternatively, may play a role as a negative regulator of the C class floral homeotic genes. Interacts together with the SKP1-like protein ASK1 to form a ubiquitin E3 ligase complex and could indirectly promote the ubiquitination and degradation of specific proteins controlling the floral primordia development like repressors of B class floral homeotic genes. This is Protein UNUSUAL FLORAL ORGANS (UFO) from Arabidopsis thaliana (Mouse-ear cress).